A 148-amino-acid polypeptide reads, in one-letter code: Putative pre-16S rRNA nuclease (148 aa).

Belongs to the YqgF nuclease family.

The protein resides in the cytoplasm. In terms of biological role, could be a nuclease involved in processing of the 5'-end of pre-16S rRNA. This chain is Putative pre-16S rRNA nuclease, found in Colwellia psychrerythraea (strain 34H / ATCC BAA-681) (Vibrio psychroerythus).